Reading from the N-terminus, the 623-residue chain is Adenine deaminase 2 (623 aa).

It belongs to the metallo-dependent hydrolases superfamily. Adenine deaminase family. The cofactor is Mn(2+).

The enzyme catalyses adenine + H2O + H(+) = hypoxanthine + NH4(+). The protein is Adenine deaminase 2 of Jannaschia sp. (strain CCS1).